We begin with the raw amino-acid sequence, 345 residues long: Methionine import ATP-binding protein MetN (345 aa).

The ABC transporter domain maps to 2-241; that stretch reads IKLKNISKVF…PKTLLAQEFI (240 aa). 38–45 provides a ligand contact to ATP; the sequence is GASGAGKS.

It belongs to the ABC transporter superfamily. Methionine importer (TC 3.A.1.24) family. In terms of assembly, the complex is composed of two ATP-binding proteins (MetN), two transmembrane proteins (MetI) and a solute-binding protein (MetQ).

It localises to the cell inner membrane. The enzyme catalyses L-methionine(out) + ATP + H2O = L-methionine(in) + ADP + phosphate + H(+). It catalyses the reaction D-methionine(out) + ATP + H2O = D-methionine(in) + ADP + phosphate + H(+). Functionally, part of the ABC transporter complex MetNIQ involved in methionine import. Responsible for energy coupling to the transport system. The protein is Methionine import ATP-binding protein MetN of Histophilus somni (strain 129Pt) (Haemophilus somnus).